Consider the following 267-residue polypeptide: N-acetylgalactosamine permease IIC component 1 (267 aa).

The Periplasmic portion of the chain corresponds to 1-10 (MHEITLLQGL). In terms of domain architecture, PTS EIIC type-4 spans 1-237 (MHEITLLQGL…VAVLGAGFAV (237 aa)). Residues 11 to 31 (SLAALVFVLGIDFWLEALFLF) traverse the membrane as a helical segment. The Cytoplasmic segment spans residues 32 to 33 (RP). A helical transmembrane segment spans residues 34 to 54 (IIVCTLTGAILGDIQTGLITG). Over 55-66 (GLTELAFAGLTP) the chain is Periplasmic. The helical transmembrane segment at 67–87 (AGGVQPPNPIMAGLMTTVIAW) threads the bilayer. At 88-94 (STGVDAK) the chain is on the cytoplasmic side. A helical transmembrane segment spans residues 95–115 (TAIGLGLPFSLLMQYVILFFY). Residues 116-141 (SAFSLFMTKADKCAKEADTAAFSRLN) are Periplasmic-facing. The chain crosses the membrane as a helical span at residues 142–162 (WTTMLIVASAYAVIAFLCTYL). Residues 163–177 (AQGAMQALVKAMPAW) lie on the Cytoplasmic side of the membrane. The chain crosses the membrane as a helical span at residues 178 to 198 (LTHGFEVAGGILPAVGFGLLL). The Periplasmic segment spans residues 199 to 209 (RVMFKAQYIPY). A helical transmembrane segment spans residues 210–230 (LIAGFLFVCYIQVSNLLPVAV). At 231–267 (LGAGFAVYEFFNAKSRQQAQPQPVASKNEEEDYSNGI) the chain is on the cytoplasmic side.

It is found in the cell inner membrane. In terms of biological role, the phosphoenolpyruvate-dependent sugar phosphotransferase system (PTS), a major carbohydrate active -transport system, catalyzes the phosphorylation of incoming sugar substrates concomitant with their translocation across the cell membrane. This system is involved in N-acetylgalactosamine transport. This chain is N-acetylgalactosamine permease IIC component 1 (agaC), found in Escherichia coli (strain K12).